A 427-amino-acid chain; its full sequence is MESLTLQPIARVDGAINLPGSKSVSNRALLLAALACGKTVLTNLLDSDDVRHMLNALSALGINYTLSADRTRCDITGNGGPLRASGALELFLGNAGTAMRPLAAALCLGQNEIVLTGEPRMKERPIGHLVDSLRQGGANIDYQEQENYPPLRLRGGFTGGDIEVDGSVSSQFLTALLMTAPLAPEDTTIRVKGELVSKPYIDITLNLMKTFGVEITNHHYQQFVVKGGQQYHSPGRYLVEGDASSASYFLAAGAIKGGTVKVTGIGRKSMQGDIRFADVLEKMGATITWGDDFIACTRGELHAIDMDMNHIPDAAMTIATTALFAKGTTTLRNIYNWRVKETDRLFAMATELRKVGAEVEEGHDYIRITPPAKLQHADIGTYNDHRMAMCFSLVALSDTPVTILDPKCTAKTFPDYFEQLARMSTPA.

The 3-phosphoshikimate site is built by Lys22, Ser23, and Arg27. Position 22 (Lys22) interacts with phosphoenolpyruvate. Phosphoenolpyruvate-binding residues include Gly96 and Arg124. Residues Ser169, Ser170, Gln171, Ser197, Asp313, Asn336, and Lys340 each contribute to the 3-phosphoshikimate site. A phosphoenolpyruvate-binding site is contributed by Gln171. Asp313 functions as the Proton acceptor in the catalytic mechanism. Phosphoenolpyruvate-binding residues include Arg344, Arg386, and Lys411.

It belongs to the EPSP synthase family. Monomer.

The protein resides in the cytoplasm. The enzyme catalyses 3-phosphoshikimate + phosphoenolpyruvate = 5-O-(1-carboxyvinyl)-3-phosphoshikimate + phosphate. It functions in the pathway metabolic intermediate biosynthesis; chorismate biosynthesis; chorismate from D-erythrose 4-phosphate and phosphoenolpyruvate: step 6/7. In terms of biological role, catalyzes the transfer of the enolpyruvyl moiety of phosphoenolpyruvate (PEP) to the 5-hydroxyl of shikimate-3-phosphate (S3P) to produce enolpyruvyl shikimate-3-phosphate and inorganic phosphate. In Salmonella heidelberg (strain SL476), this protein is 3-phosphoshikimate 1-carboxyvinyltransferase.